Here is a 245-residue protein sequence, read N- to C-terminus: tRNA1(Val) (adenine(37)-N6)-methyltransferase (245 aa).

It belongs to the methyltransferase superfamily. tRNA (adenine-N(6)-)-methyltransferase family.

It localises to the cytoplasm. The enzyme catalyses adenosine(37) in tRNA1(Val) + S-adenosyl-L-methionine = N(6)-methyladenosine(37) in tRNA1(Val) + S-adenosyl-L-homocysteine + H(+). In terms of biological role, specifically methylates the adenine in position 37 of tRNA(1)(Val) (anticodon cmo5UAC). The sequence is that of tRNA1(Val) (adenine(37)-N6)-methyltransferase from Citrobacter koseri (strain ATCC BAA-895 / CDC 4225-83 / SGSC4696).